Reading from the N-terminus, the 513-residue chain is Protein disulfide-isomerase 2 (513 aa).

An N-terminal signal peptide occupies residues 1–20 (MNKFLALLFVLALFANIAFS). Thioredoxin domains lie at 21–147 (CEGH…EELK) and 355–486 (DVIG…DNAA). Residues Cys70, Cys73, Cys406, and Cys409 each act as nucleophile in the active site. Cystine bridges form between Cys70-Cys73 and Cys406-Cys409. The interval 491–513 (LPSSQTDDNVESKKDSSAKHDEL) is disordered. The segment covering 500 to 513 (VESKKDSSAKHDEL) has biased composition (basic and acidic residues). Residues 510-513 (HDEL) carry the Prevents secretion from ER motif.

It belongs to the protein disulfide isomerase family.

Its subcellular location is the endoplasmic reticulum lumen. It carries out the reaction Catalyzes the rearrangement of -S-S- bonds in proteins.. In terms of biological role, participates in the folding of proteins containing disulfide bonds, may be involved in glycosylation, prolyl hydroxylation and triglyceride transfer. The polypeptide is Protein disulfide-isomerase 2 (pdi2) (Dictyostelium discoideum (Social amoeba)).